A 205-amino-acid chain; its full sequence is Adenylyl-sulfate kinase (205 aa).

31–38 lines the ATP pocket; the sequence is GLSGAGKS. Residue Ser105 is the Phosphoserine intermediate of the active site.

It belongs to the APS kinase family.

It catalyses the reaction adenosine 5'-phosphosulfate + ATP = 3'-phosphoadenylyl sulfate + ADP + H(+). The protein operates within sulfur metabolism; hydrogen sulfide biosynthesis; sulfite from sulfate: step 2/3. Its function is as follows. Catalyzes the synthesis of activated sulfate. In Shewanella denitrificans (strain OS217 / ATCC BAA-1090 / DSM 15013), this protein is Adenylyl-sulfate kinase.